We begin with the raw amino-acid sequence, 320 residues long: Small ribosomal subunit protein uS15m (320 aa).

Disordered stretches follow at residues 37-60 and 214-242; these read NISQ…AQQR and QSLE…DTGS.

Belongs to the universal ribosomal protein uS15 family. Component of the mitochondrial small ribosomal subunit (mt-SSU). Mature N.crassa 74S mitochondrial ribosomes consist of a small (37S) and a large (54S) subunit. The 37S small subunit contains a 16S ribosomal RNA (16S mt-rRNA) and 32 different proteins. The 54S large subunit contains a 23S rRNA (23S mt-rRNA) and 42 different proteins.

It is found in the mitochondrion. Functionally, component of the mitochondrial ribosome (mitoribosome), a dedicated translation machinery responsible for the synthesis of mitochondrial genome-encoded proteins, including at least some of the essential transmembrane subunits of the mitochondrial respiratory chain. The mitoribosomes are attached to the mitochondrial inner membrane and translation products are cotranslationally integrated into the membrane. The chain is Small ribosomal subunit protein uS15m (mrps28) from Neurospora crassa (strain ATCC 24698 / 74-OR23-1A / CBS 708.71 / DSM 1257 / FGSC 987).